The following is a 616-amino-acid chain: Glutamine--fructose-6-phosphate aminotransferase [isomerizing] (616 aa).

C2 serves as the catalytic Nucleophile; for GATase activity. In terms of domain architecture, Glutamine amidotransferase type-2 spans C2 to E221. SIS domains are found at residues L288 to T428 and L461 to P606. K611 serves as the catalytic For Fru-6P isomerization activity.

Homodimer.

The protein resides in the cytoplasm. It catalyses the reaction D-fructose 6-phosphate + L-glutamine = D-glucosamine 6-phosphate + L-glutamate. In terms of biological role, catalyzes the first step in hexosamine metabolism, converting fructose-6P into glucosamine-6P using glutamine as a nitrogen source. This Leifsonia xyli subsp. xyli (strain CTCB07) protein is Glutamine--fructose-6-phosphate aminotransferase [isomerizing].